The primary structure comprises 427 residues: MGVWLKNGMSFNKDGELMRTHIKIEHGTIAAILYEQPLEANEDVIDVGGRLIVPGLIDLHVHLREPGGEAKETIETGTLAAAKGGFTTVAAMPNTNPAPDRKEQMEWLQARIRETARVNVLPYAAITIGQKGEELTDFAALKEAGAFAFTDDGVGVQSAGMMFEAMKQAAALDMAIVAHCEDDTLTNGGAVHDGEFARRYGLRGIPSVCEAVHIARDVLLAEAAGCHYHVCHISTKESVRVVRDAKRAGIRVTAEVTPHHLLLCDEDIPGLDANYKMNPPLRSREDRDALIEGLLDGTIDFIATDHAPHTAAEKAKGIEAAPFGIVGLETAFPLLYTHFVKTGVFTLKQLVDWLTIKPAQCFGLKAGRLAVGAPADIAVIDLETEEAIDPETFASKGKNTPFAGWVCQGWPVMTFVGGTLVWEKGRA.

The Zn(2+) site is built by His-60 and His-62. Substrate is bound by residues 62-64 (HLR) and Asn-94. Zn(2+) contacts are provided by Asp-152, His-179, and His-232. Position 278 (Asn-278) interacts with substrate. Position 305 (Asp-305) interacts with Zn(2+). Residue Asp-305 is part of the active site. Substrate is bound by residues His-309 and 323 to 324 (FG).

This sequence belongs to the metallo-dependent hydrolases superfamily. DHOase family. Class I DHOase subfamily. Zn(2+) is required as a cofactor.

It catalyses the reaction (S)-dihydroorotate + H2O = N-carbamoyl-L-aspartate + H(+). It participates in pyrimidine metabolism; UMP biosynthesis via de novo pathway; (S)-dihydroorotate from bicarbonate: step 3/3. Functionally, catalyzes the reversible cyclization of carbamoyl aspartate to dihydroorotate. The chain is Dihydroorotase from Bacillus caldolyticus.